The sequence spans 126 residues: Large ribosomal subunit protein bL12 (126 aa).

The protein belongs to the bacterial ribosomal protein bL12 family. As to quaternary structure, homodimer. Part of the ribosomal stalk of the 50S ribosomal subunit. Forms a multimeric L10(L12)X complex, where L10 forms an elongated spine to which 2 to 4 L12 dimers bind in a sequential fashion. Binds GTP-bound translation factors.

Its function is as follows. Forms part of the ribosomal stalk which helps the ribosome interact with GTP-bound translation factors. Is thus essential for accurate translation. The chain is Large ribosomal subunit protein bL12 from Geobacter sp. (strain M21).